A 538-amino-acid chain; its full sequence is Putative cysteine ligase BshC (538 aa).

Positions Lys460–Gln483 form a coiled coil.

The protein belongs to the BshC family.

Functionally, involved in bacillithiol (BSH) biosynthesis. May catalyze the last step of the pathway, the addition of cysteine to glucosamine malate (GlcN-Mal) to generate BSH. This chain is Putative cysteine ligase BshC, found in Bacillus mycoides (strain KBAB4) (Bacillus weihenstephanensis).